The chain runs to 240 residues: Protein OXIDATIVE STRESS 3 LIKE 4 (240 aa).

A disordered region spans residues 1–128; it reads MELMAKPTFS…SKSFGNLGEI (128 aa). Polar residues predominate over residues 51-66; it reads WSGQTADYSSDSSSIG. A compositionally biased stretch (acidic residues) spans 70–84; it reads DSEEDEEESENENDD. The short motif at 142–150 is the Nuclear localization signal element; it reads NKRRRLQIC. Residues 163–207 form a disordered region; it reads NPKSMPLLPVNEDEDDDDEDDDEEDLKSGFDENKSSSDEEGVKKV. Positions 173-187 are enriched in acidic residues; it reads NEDEDDDDEDDDEED. The span at 188–205 shows a compositional bias: basic and acidic residues; that stretch reads LKSGFDENKSSSDEEGVK. The segment at 202–229 is kinase-inducible domain (KID); it reads EGVKKVVVRKGSFKNRAYKSRSCFALSD. A Phosphoserine modification is found at Ser-213.

As to quaternary structure, interacts with HDA19; Ser-213 is critical for this interaction.

The protein localises to the nucleus. Its function is as follows. Transcription activator which may regulates gene expression through interaction with the histone deacetylase HDA19. Promotes slightly the tolerance to cadmium (Cd) and to oxidizing chemicals (e.g. diamide and tert-butyl hydroperoxide (t-BOOH)). This Arabidopsis thaliana (Mouse-ear cress) protein is Protein OXIDATIVE STRESS 3 LIKE 4.